Here is a 124-residue protein sequence, read N- to C-terminus: Conotoxin Cl14.12 (124 aa).

Residues 1–17 (MKVAVVLLVSLLAVTYA) form the signal peptide. A propeptide spanning residues 18–74 (LPEKRIFFGGIVDKVKDTFTKIFNKAKETFDKITDGFDVDFDEVVDKLIAQIHSTPT) is cleaved from the precursor.

In terms of processing, contains 2 disulfide bond. Expressed by the venom duct.

The protein localises to the secreted. This is Conotoxin Cl14.12 from Californiconus californicus (California cone).